Here is a 177-residue protein sequence, read N- to C-terminus: Interleukin-10 (177 aa).

The signal sequence occupies residues Met-1–Ala-19. Intrachain disulfides connect Cys-31–Cys-127 and Cys-81–Cys-133. Asn-135 carries N-linked (GlcNAc...) asparagine glycosylation.

The protein belongs to the IL-10 family. As to quaternary structure, homodimer. Interacts with IL10RA and IL10RB.

It is found in the secreted. Functionally, major immune regulatory cytokine that acts on many cells of the immune system where it has profound anti-inflammatory functions, limiting excessive tissue disruption caused by inflammation. Mechanistically, IL10 binds to its heterotetrameric receptor comprising IL10RA and IL10RB leading to JAK1 and STAT2-mediated phosphorylation of STAT3. In turn, STAT3 translocates to the nucleus where it drives expression of anti-inflammatory mediators. Targets antigen-presenting cells (APCs) such as macrophages and monocytes and inhibits their release of pro-inflammatory cytokines including granulocyte-macrophage colony-stimulating factor /GM-CSF, granulocyte colony-stimulating factor/G-CSF, IL-1 alpha, IL-1 beta, IL-6, IL-8 and TNF-alpha. Also interferes with antigen presentation by reducing the expression of MHC-class II and co-stimulatory molecules, thereby inhibiting their ability to induce T cell activation. In addition, controls the inflammatory response of macrophages by reprogramming essential metabolic pathways including mTOR signaling. In Ovis aries (Sheep), this protein is Interleukin-10 (IL10).